The primary structure comprises 455 residues: Argininosuccinate lyase (455 aa).

It belongs to the lyase 1 family. Argininosuccinate lyase subfamily.

The protein localises to the cytoplasm. The enzyme catalyses 2-(N(omega)-L-arginino)succinate = fumarate + L-arginine. The protein operates within amino-acid biosynthesis; L-arginine biosynthesis; L-arginine from L-ornithine and carbamoyl phosphate: step 3/3. This chain is Argininosuccinate lyase, found in Shewanella baltica (strain OS195).